The following is a 130-amino-acid chain: Small ribosomal subunit protein uS8 (130 aa).

The protein belongs to the universal ribosomal protein uS8 family. Part of the 30S ribosomal subunit. Contacts proteins S5 and S12.

Its function is as follows. One of the primary rRNA binding proteins, it binds directly to 16S rRNA central domain where it helps coordinate assembly of the platform of the 30S subunit. This chain is Small ribosomal subunit protein uS8, found in Cytophaga hutchinsonii (strain ATCC 33406 / DSM 1761 / CIP 103989 / NBRC 15051 / NCIMB 9469 / D465).